The chain runs to 420 residues: MAPK/MAK/MRK overlapping kinase (420 aa).

Positions 4 to 285 (YKAIGKIGEG…AHQALQHPYF (282 aa)) constitute a Protein kinase domain. Residues 10–18 (IGEGTFSEV) and Lys33 each bind ATP. Residue Asp128 is the Proton acceptor of the active site. Polar residues predominate over residues 311–322 (PESSSHNWSFSQ). A disordered region spans residues 311–344 (PESSSHNWSFSQEGRKQKQSLRHEEGHARRQGPT). The segment covering 323-338 (EGRKQKQSLRHEEGHA) has biased composition (basic and acidic residues).

Belongs to the protein kinase superfamily. CMGC Ser/Thr protein kinase family. CDC2/CDKX subfamily. Requires Mg(2+) as cofactor. Autophosphorylated. As to expression, highly expressed in testis, and less in kidney, brain and lung.

It localises to the cytoplasm. The protein resides in the cell projection. The protein localises to the cilium. Its subcellular location is the nucleus. It carries out the reaction L-seryl-[protein] + ATP = O-phospho-L-seryl-[protein] + ADP + H(+). It catalyses the reaction L-threonyl-[protein] + ATP = O-phospho-L-threonyl-[protein] + ADP + H(+). Its activity is regulated as follows. Phosphorylation appears to increase the enzymatic activity. Functionally, able to phosphorylate several exogenous substrates and to undergo autophosphorylation. Negatively regulates cilium length in a cAMP and mTORC1 signaling-dependent manner. This chain is MAPK/MAK/MRK overlapping kinase (Mok), found in Mus musculus (Mouse).